The sequence spans 853 residues: Leucine--tRNA ligase (853 aa).

The short motif at 42–52 is the 'HIGH' region element; that stretch reads PYPSGNLHMGH. Positions 615–619 match the 'KMSKS' region motif; that stretch reads KMSKS. Lys-618 contributes to the ATP binding site.

Belongs to the class-I aminoacyl-tRNA synthetase family.

The protein resides in the cytoplasm. The catalysed reaction is tRNA(Leu) + L-leucine + ATP = L-leucyl-tRNA(Leu) + AMP + diphosphate. The sequence is that of Leucine--tRNA ligase from Crocosphaera subtropica (strain ATCC 51142 / BH68) (Cyanothece sp. (strain ATCC 51142)).